The chain runs to 141 residues: Nucleoside triphosphatase NudI (141 aa).

Residues 1-141 (MRQRTIVCPL…RHTLALKGLL (141 aa)) enclose the Nudix hydrolase domain. The short motif at 38 to 59 (GGVEPGERIEEALRREVREELG) is the Nudix box element.

It belongs to the Nudix hydrolase family. NudI subfamily. Monomer. Requires Mg(2+) as cofactor.

It carries out the reaction a ribonucleoside 5'-triphosphate + H2O = a ribonucleoside 5'-phosphate + diphosphate + H(+). The enzyme catalyses a 2'-deoxyribonucleoside 5'-triphosphate + H2O = a 2'-deoxyribonucleoside 5'-phosphate + diphosphate + H(+). It catalyses the reaction dUTP + H2O = dUMP + diphosphate + H(+). The catalysed reaction is dTTP + H2O = dTMP + diphosphate + H(+). It carries out the reaction dCTP + H2O = dCMP + diphosphate + H(+). Functionally, catalyzes the hydrolysis of nucleoside triphosphates, with a preference for pyrimidine deoxynucleoside triphosphates (dUTP, dTTP and dCTP). This Salmonella agona (strain SL483) protein is Nucleoside triphosphatase NudI.